The following is an 896-amino-acid chain: Zinc finger protein 574 (896 aa).

3 C2H2-type zinc fingers span residues 16-38 (YVCS…QNSH), 76-98 (YQCL…QELH), and 126-148 (YECV…RQTH). Residue S164 is modified to Phosphoserine. The C2H2-type 4 zinc-finger motif lies at 214-236 (YKCSECSQLFQLPADFLEHQATH). Positions 239–301 (APVPESQEPA…RARRNNSGEA (63 aa)) are disordered. Residues 247–257 (PALQQEVQASS) show a composition bias toward polar residues. The segment covering 274 to 287 (HSYELRNGEAIGRD) has biased composition (basic and acidic residues). S298 bears the Phosphoserine mark. C2H2-type zinc fingers lie at residues 309–331 (LFCS…LRSH), 336–358 (FKCP…LGDH), 364–386 (FLCV…RRAH), and 392–413 (HSCP…RRTH). Positions 434-460 (FPEPAPAETGEPEAPEPPVSEETSAGP) are disordered. 6 C2H2-type zinc fingers span residues 466–489 (YRCL…RFVH), 495–517 (HKCS…LRTH), 523–545 (FPCP…RLTH), 551–573 (YRCG…RLVH), 579–601 (YRCQ…RYHH), and 607–630 (YKCR…LVVH). A C2H2-type 15; degenerate zinc finger spans residues 636–659 (HRCPSCGAAFPSSLRLREHRCAAA). A C2H2-type 16 zinc finger spans residues 667–689 (FECGTCGKKVGSAARLQAHEAAH). Residues 687 to 733 (AAHAAAGPGEVLAKEPPAPRAPRATRAPVASPAGLGGTATASPAAPA) are disordered. A compositionally biased stretch (low complexity) spans 707 to 732 (APRATRAPVASPAGLGGTATASPAAP). At S717 the chain carries Phosphoserine. At T724 the chain carries Phosphothreonine. Position 728 is a phosphoserine (S728). 4 consecutive C2H2-type zinc fingers follow at residues 738–760 (LECS…RRIH), 766–788 (YPCP…RRLH), 794–816 (FACE…RRIH), and 822–844 (YSCP…RKTH). R832 bears the Asymmetric dimethylarginine mark.

It belongs to the krueppel C2H2-type zinc-finger protein family.

It is found in the nucleus. In terms of biological role, may be involved in transcriptional regulation. The protein is Zinc finger protein 574 (ZNF574) of Macaca fascicularis (Crab-eating macaque).